The sequence spans 221 residues: ATP phosphoribosyltransferase (221 aa).

It belongs to the ATP phosphoribosyltransferase family. Short subfamily. As to quaternary structure, heteromultimer composed of HisG and HisZ subunits.

Its subcellular location is the cytoplasm. It carries out the reaction 1-(5-phospho-beta-D-ribosyl)-ATP + diphosphate = 5-phospho-alpha-D-ribose 1-diphosphate + ATP. It participates in amino-acid biosynthesis; L-histidine biosynthesis; L-histidine from 5-phospho-alpha-D-ribose 1-diphosphate: step 1/9. Functionally, catalyzes the condensation of ATP and 5-phosphoribose 1-diphosphate to form N'-(5'-phosphoribosyl)-ATP (PR-ATP). Has a crucial role in the pathway because the rate of histidine biosynthesis seems to be controlled primarily by regulation of HisG enzymatic activity. The polypeptide is ATP phosphoribosyltransferase (Anaeromyxobacter dehalogenans (strain 2CP-1 / ATCC BAA-258)).